Consider the following 363-residue polypeptide: Transcriptional regulator AacuR (363 aa).

Residues M1–R24 are disordered. A DNA-binding region (zn(2)-C6 fungal-type) is located at residues C27–C54. Residues R63–H72 show a composition bias toward basic residues. The interval R63 to K104 is disordered. The span at I76–S102 shows a compositional bias: low complexity.

Its subcellular location is the nucleus. In terms of biological role, transcriptional regulator; part of the gene cluster that mediates the biosynthesis of the tetrahydroxanthone dimer secalonic acid D. The chain is Transcriptional regulator AacuR from Aspergillus aculeatus (strain ATCC 16872 / CBS 172.66 / WB 5094).